The chain runs to 322 residues: Eukaryotic translation initiation factor 3 subunit I (322 aa).

5 WD repeats span residues 4 to 43 (GHER…RLGT), 46 to 85 (GHQG…VIAS), 141 to 180 (MTES…KVVD), 184 to 223 (DHTG…CLKT), and 281 to 322 (GHFG…NIFE).

It belongs to the eIF-3 subunit I family. In terms of assembly, component of the eukaryotic translation initiation factor 3 (eIF-3) complex. The eIF-3 complex interacts with pix.

It is found in the cytoplasm. In terms of biological role, component of the eukaryotic translation initiation factor 3 (eIF-3) complex, which is involved in protein synthesis of a specialized repertoire of mRNAs and, together with other initiation factors, stimulates binding of mRNA and methionyl-tRNAi to the 40S ribosome. The eIF-3 complex specifically targets and initiates translation of a subset of mRNAs involved in cell proliferation. This is Eukaryotic translation initiation factor 3 subunit I from Drosophila willistoni (Fruit fly).